The following is a 435-amino-acid chain: MGQTLSEPVVDKTSSEGEDDCCIYGVSAMQGWRISMEDAHAAVLDLHAKYTSPEETSTDPAKRLAFFGVYDGHGGDKVALFAGENVHKIVAKQDSFAKGDIEQALKDGFLATDRAILEDPKYEEEVSGCTAAVSVISKHKIWVANAGDSRSVLGVKGRAKPLSFDHKPQNEGEKARISAAGGFVDFGRVNGNLALSRAIGDFEFKKSPELAPEQQIVTAYPDVTVHELSDDDEFLVIACDGIWDCQSSQAVVEFVRRGIAAKQELYRICENMMDNCLASNSETGGVGCDNMTMIIIGLLNGRTKEECGDAAEFRGPGIRNQFEENPDDYDMENDRARGFSVRSGRIILLGDGTELVPDQNDEELFDQTEEDRDLPSQVQRELPDSARNEREGTPGPQSKTDATSKSEEGSSASTSESTVTPAGSSTSGAPEKSTS.

The 276-residue stretch at 23–298 (IYGVSAMQGW…DNMTMIIIGL (276 aa)) folds into the PPM-type phosphatase domain. Mn(2+) contacts are provided by Asp71, Gly72, Asp240, and Asp289. The tract at residues 366–435 (DQTEEDRDLP…TSGAPEKSTS (70 aa)) is disordered. The span at 381 to 392 (ELPDSARNEREG) shows a compositional bias: basic and acidic residues. The span at 409-418 (GSSASTSEST) shows a compositional bias: low complexity. Over residues 419 to 435 (VTPAGSSTSGAPEKSTS) the composition is skewed to polar residues.

The protein belongs to the PP2C family. The cofactor is Mg(2+). It depends on Mn(2+) as a cofactor.

Its subcellular location is the cytoplasm. The protein resides in the nucleus. It catalyses the reaction O-phospho-L-seryl-[protein] + H2O = L-seryl-[protein] + phosphate. The catalysed reaction is O-phospho-L-threonyl-[protein] + H2O = L-threonyl-[protein] + phosphate. Dephosphorylating regulator for many key proteins. Dephosphorylates phosphoglycerate kinase pgk1 at least on 'Ser-203' to negatively regulate targeting of pgk1 to the mitochondrion, thereby negatively regulating production of acetyl-CoA and consequently aflatoxin biosynthesis. The sequence is that of Protein phosphatase 2C homolog 2 from Aspergillus flavus (strain ATCC 200026 / FGSC A1120 / IAM 13836 / NRRL 3357 / JCM 12722 / SRRC 167).